Reading from the N-terminus, the 103-residue chain is Pyrimidine/purine nucleoside phosphorylase (103 aa).

The protein belongs to the nucleoside phosphorylase PpnP family.

The enzyme catalyses a purine D-ribonucleoside + phosphate = a purine nucleobase + alpha-D-ribose 1-phosphate. The catalysed reaction is adenosine + phosphate = alpha-D-ribose 1-phosphate + adenine. It carries out the reaction cytidine + phosphate = cytosine + alpha-D-ribose 1-phosphate. It catalyses the reaction guanosine + phosphate = alpha-D-ribose 1-phosphate + guanine. The enzyme catalyses inosine + phosphate = alpha-D-ribose 1-phosphate + hypoxanthine. The catalysed reaction is thymidine + phosphate = 2-deoxy-alpha-D-ribose 1-phosphate + thymine. It carries out the reaction uridine + phosphate = alpha-D-ribose 1-phosphate + uracil. It catalyses the reaction xanthosine + phosphate = alpha-D-ribose 1-phosphate + xanthine. Catalyzes the phosphorolysis of diverse nucleosides, yielding D-ribose 1-phosphate and the respective free bases. Can use uridine, adenosine, guanosine, cytidine, thymidine, inosine and xanthosine as substrates. Also catalyzes the reverse reactions. In Shewanella denitrificans (strain OS217 / ATCC BAA-1090 / DSM 15013), this protein is Pyrimidine/purine nucleoside phosphorylase.